The following is a 441-amino-acid chain: Ribulose bisphosphate carboxylase large chain (441 aa).

Lys-5 carries the N6,N6,N6-trimethyllysine modification. 2 residues coordinate substrate: Asn-114 and Thr-164. The active-site Proton acceptor is Lys-166. Residue Lys-168 coordinates substrate. Residues Lys-192, Asp-194, and Glu-195 each contribute to the Mg(2+) site. An N6-carboxylysine modification is found at Lys-192. His-285 (proton acceptor) is an active-site residue. Substrate is bound by residues Arg-286, His-318, and Ser-370.

This sequence belongs to the RuBisCO large chain family. Type I subfamily. As to quaternary structure, heterohexadecamer of 8 large chains and 8 small chains; disulfide-linked. The disulfide link is formed within the large subunit homodimers. Requires Mg(2+) as cofactor. In terms of processing, the disulfide bond which can form in the large chain dimeric partners within the hexadecamer appears to be associated with oxidative stress and protein turnover.

It is found in the plastid. The protein resides in the chloroplast. It catalyses the reaction 2 (2R)-3-phosphoglycerate + 2 H(+) = D-ribulose 1,5-bisphosphate + CO2 + H2O. The catalysed reaction is D-ribulose 1,5-bisphosphate + O2 = 2-phosphoglycolate + (2R)-3-phosphoglycerate + 2 H(+). RuBisCO catalyzes two reactions: the carboxylation of D-ribulose 1,5-bisphosphate, the primary event in carbon dioxide fixation, as well as the oxidative fragmentation of the pentose substrate in the photorespiration process. Both reactions occur simultaneously and in competition at the same active site. The sequence is that of Ribulose bisphosphate carboxylase large chain from Begonia metallica x Begonia sanguinea.